An 83-amino-acid polypeptide reads, in one-letter code: Small ribosomal subunit protein bS16 (83 aa).

This sequence belongs to the bacterial ribosomal protein bS16 family.

The polypeptide is Small ribosomal subunit protein bS16 (Chromobacterium violaceum (strain ATCC 12472 / DSM 30191 / JCM 1249 / CCUG 213 / NBRC 12614 / NCIMB 9131 / NCTC 9757 / MK)).